The following is a 312-amino-acid chain: MGDDNDTDITEFILLGFSGYGFLQGHLFWGVLCIYVVTLLGNSLIVLLTLADSALHSPMYFFLRHFSVVEILYTTTIVPRMLADLRSSCPTIPLASCFTQLYFFALFGIAECCLLTAMAYDRYAAICCPLHYTTLMSQGTYTGLVGASYLAGVISGTTHSIFIFTLPFRGAKTIHHFLCDILPVLRLATASTFWGEVGNLFVTITFIFVPFLLIVASYACILVTILGVATSQGRQKLFSTCSSHLFVVILFFGTATVAYMRPQADSFGNTDQILTLVYTVVTPMCNPFVYSLRNKEVTGAMRRLMKRYLWGP.

The Extracellular portion of the chain corresponds to 1–26; sequence MGDDNDTDITEFILLGFSGYGFLQGH. Asn5 is a glycosylation site (N-linked (GlcNAc...) asparagine). Residues 27–47 form a helical membrane-spanning segment; the sequence is LFWGVLCIYVVTLLGNSLIVL. The Cytoplasmic portion of the chain corresponds to 48-57; sequence LTLADSALHS. A helical membrane pass occupies residues 58–78; it reads PMYFFLRHFSVVEILYTTTIV. Over 79–89 the chain is Extracellular; the sequence is PRMLADLRSSC. The chain crosses the membrane as a helical span at residues 90-110; that stretch reads PTIPLASCFTQLYFFALFGIA. The Cytoplasmic portion of the chain corresponds to 111 to 143; it reads ECCLLTAMAYDRYAAICCPLHYTTLMSQGTYTG. The chain crosses the membrane as a helical span at residues 144–164; the sequence is LVGASYLAGVISGTTHSIFIF. Over 165–205 the chain is Extracellular; it reads TLPFRGAKTIHHFLCDILPVLRLATASTFWGEVGNLFVTIT. Residues 206–226 form a helical membrane-spanning segment; the sequence is FIFVPFLLIVASYACILVTIL. Topologically, residues 227–236 are cytoplasmic; the sequence is GVATSQGRQK. Residues 237 to 257 traverse the membrane as a helical segment; sequence LFSTCSSHLFVVILFFGTATV. The Extracellular segment spans residues 258–271; that stretch reads AYMRPQADSFGNTD. A helical transmembrane segment spans residues 272-292; sequence QILTLVYTVVTPMCNPFVYSL. Topologically, residues 293 to 312 are cytoplasmic; it reads RNKEVTGAMRRLMKRYLWGP.

It belongs to the G-protein coupled receptor 1 family.

The protein localises to the cell membrane. Functionally, odorant receptor. This Mus musculus (Mouse) protein is Olfactory receptor 10P22.